Consider the following 206-residue polypeptide: Dephospho-CoA kinase (206 aa).

The DPCK domain occupies 4–204; the sequence is IVGLTGGIGS…QFYLQQAENK (201 aa). Position 12-17 (12-17) interacts with ATP; it reads GSGKTT.

It belongs to the CoaE family.

Its subcellular location is the cytoplasm. It catalyses the reaction 3'-dephospho-CoA + ATP = ADP + CoA + H(+). It participates in cofactor biosynthesis; coenzyme A biosynthesis; CoA from (R)-pantothenate: step 5/5. Functionally, catalyzes the phosphorylation of the 3'-hydroxyl group of dephosphocoenzyme A to form coenzyme A. This is Dephospho-CoA kinase from Haemophilus influenzae (strain ATCC 51907 / DSM 11121 / KW20 / Rd).